A 329-amino-acid polypeptide reads, in one-letter code: Malate dehydrogenase (329 aa).

12-18 (GAAGQIG) is an NAD(+) binding site. The substrate site is built by Arg-95 and Arg-101. NAD(+)-binding positions include Asn-108, Gln-115, and 132 to 134 (VGN). Substrate contacts are provided by Asn-134 and Arg-165. His-190 functions as the Proton acceptor in the catalytic mechanism.

It belongs to the LDH/MDH superfamily. MDH type 2 family. As to quaternary structure, homodimer.

It catalyses the reaction (S)-malate + NAD(+) = oxaloacetate + NADH + H(+). Its activity is regulated as follows. Substrate inhibition is observed at high concentrations of oxaloacetate. Functionally, catalyzes the reversible oxidation of malate to oxaloacetate. Catalyzes the reduction of oxaloacetate more efficiently than the oxidation of malate. This Syntrophobacter fumaroxidans (strain DSM 10017 / MPOB) protein is Malate dehydrogenase.